Reading from the N-terminus, the 383-residue chain is Lipid-A-disaccharide synthase (383 aa).

Belongs to the LpxB family.

It catalyses the reaction a lipid X + a UDP-2-N,3-O-bis[(3R)-3-hydroxyacyl]-alpha-D-glucosamine = a lipid A disaccharide + UDP + H(+). The protein operates within bacterial outer membrane biogenesis; LPS lipid A biosynthesis. Functionally, condensation of UDP-2,3-diacylglucosamine and 2,3-diacylglucosamine-1-phosphate to form lipid A disaccharide, a precursor of lipid A, a phosphorylated glycolipid that anchors the lipopolysaccharide to the outer membrane of the cell. The chain is Lipid-A-disaccharide synthase from Aliivibrio salmonicida (strain LFI1238) (Vibrio salmonicida (strain LFI1238)).